Here is a 263-residue protein sequence, read N- to C-terminus: MKNVMFIGYGSMARKVHEMLPKNIILSTVLVSTRSAEIIKTELGESIAVITSVDDLIETPDLAVEMSGQDGLKEHAIKILGKSIPLGIISVGAFTDEKFAISLADTAEANGVEIHILAGAVAGIDGIHAASFAGLSDVVYQGKKHPSSWKGSHADRLIDYDNLVEPTVFFTGTAREAAALFPDNSNVAATIAIAGVGLDDTTVELIADPTLEYNIHHIMAKGVFGKLEISMAGLPLVENPKTSSLAAFSALRLCCQIDQVIQM.

Positions 120 and 186 each coordinate NAD(+). The active site involves His216.

This sequence belongs to the L-aspartate dehydrogenase family.

The enzyme catalyses L-aspartate + NADP(+) + H2O = oxaloacetate + NH4(+) + NADPH + H(+). It catalyses the reaction L-aspartate + NAD(+) + H2O = oxaloacetate + NH4(+) + NADH + H(+). Its pathway is cofactor biosynthesis; NAD(+) biosynthesis; iminoaspartate from L-aspartate (dehydrogenase route): step 1/1. Functionally, specifically catalyzes the NAD or NADP-dependent dehydrogenation of L-aspartate to iminoaspartate. The protein is L-aspartate dehydrogenase of Psychrobacter cryohalolentis (strain ATCC BAA-1226 / DSM 17306 / VKM B-2378 / K5).